We begin with the raw amino-acid sequence, 593 residues long: MSDDYFDRLFELAFVYINEDETIQSCSFRGQRWLEEAQTLEQKNSLLKAYYYYLKALKLAYEIPCRFEISVKSTHYGEFKQFQKLAIQAVSKAFTIKSKLAVKHYLPVIQISDALSLSKKSSLKVLFLNFYSQESSKGYVFSKHTIAIPISCLQSMDSSKIYDFLKSAPFHPSMVICYSLERYFEDVSLAYKLYSMLRSLKLDPHFMELANPKKVDSSLSYENYQPIGLTNLGNTCYMNCVLQCLFACKDLTIPMLQGRGLLQNINTKNPLGTGGKITSAFFSLLQSVLLNHGQRSISPRNFLEIVQSLNRDFSIDGQCDAQEFLNFFLDKLHEDLNSNASRSPIAPLTEDQLSAREELPLSHFSHIEWNLHLRSNKSIVVNNFVGQLCSRTQCMTCGRTSTTFAPFTSLAIPIDDVSHVVSLQECLLKFSAPELLQGHDGWHCPVCKVQRSAKKVIMISKLPEYLIIQIQRFKISVMGRKKIDTPLGLSLQIPSKMLVPPSFQSGIGYIPSNYNLFAFICHYGQLENGHYISDVLFNNEWCHIDDSIVRTVGGITDLREDFSSSYILFYKRSSLLEEFEDKCPKMTLKRNVK.

One can recognise a USP domain in the interval 227-573; it reads IGLTNLGNTC…SSYILFYKRS (347 aa). C236 acts as the Nucleophile in catalysis. Phosphoserine is present on residues S338 and S343. The active-site Proton acceptor is H530.

It belongs to the peptidase C19 family. As to quaternary structure, interacts with sfp47.

It localises to the cytoplasm. The protein localises to the endosome. The catalysed reaction is Thiol-dependent hydrolysis of ester, thioester, amide, peptide and isopeptide bonds formed by the C-terminal Gly of ubiquitin (a 76-residue protein attached to proteins as an intracellular targeting signal).. In terms of biological role, has an ATP-independent isopeptidase activity, cleaving at the C-terminus of the ubiquitin moiety. Acts late in the proteolytic pathway in conjunction with the 26S proteasome. Plays a role in avoiding DNA overreplication. This chain is Probable ubiquitin carboxyl-terminal hydrolase 4 (ubp4), found in Schizosaccharomyces pombe (strain 972 / ATCC 24843) (Fission yeast).